Consider the following 186-residue polypeptide: GTP cyclohydrolase 1 2 (186 aa).

Belongs to the GTP cyclohydrolase I family. As to quaternary structure, homomer.

It catalyses the reaction GTP + H2O = 7,8-dihydroneopterin 3'-triphosphate + formate + H(+). The protein operates within cofactor biosynthesis; 7,8-dihydroneopterin triphosphate biosynthesis; 7,8-dihydroneopterin triphosphate from GTP: step 1/1. The protein is GTP cyclohydrolase 1 2 of Pseudomonas putida (strain ATCC 47054 / DSM 6125 / CFBP 8728 / NCIMB 11950 / KT2440).